The chain runs to 83 residues: Small ribosomal subunit protein bS18 (83 aa).

Belongs to the bacterial ribosomal protein bS18 family. Part of the 30S ribosomal subunit. Forms a tight heterodimer with protein bS6.

Its function is as follows. Binds as a heterodimer with protein bS6 to the central domain of the 16S rRNA, where it helps stabilize the platform of the 30S subunit. The protein is Small ribosomal subunit protein bS18 of Desulfosudis oleivorans (strain DSM 6200 / JCM 39069 / Hxd3) (Desulfococcus oleovorans).